Consider the following 189-residue polypeptide: HGPRTase-like protein 1 (189 aa).

The protein belongs to the purine/pyrimidine phosphoribosyltransferase family. Archaeal HPRT subfamily.

Functionally, may catalyze a purine salvage reaction, the substrate is unknown. This chain is HGPRTase-like protein 1, found in Natrialba magadii (strain ATCC 43099 / DSM 3394 / CCM 3739 / CIP 104546 / IAM 13178 / JCM 8861 / NBRC 102185 / NCIMB 2190 / MS3) (Natronobacterium magadii).